A 428-amino-acid chain; its full sequence is Glutamate-1-semialdehyde 2,1-aminomutase (428 aa).

An N6-(pyridoxal phosphate)lysine modification is found at lysine 267.

Belongs to the class-III pyridoxal-phosphate-dependent aminotransferase family. HemL subfamily. Homodimer. Pyridoxal 5'-phosphate serves as cofactor.

Its subcellular location is the cytoplasm. It carries out the reaction (S)-4-amino-5-oxopentanoate = 5-aminolevulinate. The protein operates within porphyrin-containing compound metabolism; protoporphyrin-IX biosynthesis; 5-aminolevulinate from L-glutamyl-tRNA(Glu): step 2/2. It functions in the pathway porphyrin-containing compound metabolism; chlorophyll biosynthesis. The sequence is that of Glutamate-1-semialdehyde 2,1-aminomutase from Prochlorococcus marinus (strain MIT 9313).